We begin with the raw amino-acid sequence, 620 residues long: EF-hand calcium-binding domain-containing protein 7 (620 aa).

The disordered stretch occupies residues 1 to 24; sequence MANHSSLPSQKYAASERQEYQKPQ. 2 EF-hand domains span residues 98–133 and 134–169; these read ATKNELLKAFRKIDTNNKGYILHNDLYEILTTKGEK and MSQEEVNSVFRLAEVNSNGKLDYNKFCSTFFKTCEQ. Positions 176–234 are disordered; sequence ERMDSNSKAKRQQFGSYIEKSPERSSSPKSSHGNLKLFDSETSTRKENKSSRPSSARSY. Residues 213 to 225 are compositionally biased toward basic and acidic residues; it reads FDSETSTRKENKS. An EF-hand 3 domain is found at 394 to 429; it reads EFKSALSDMFDIIDLDGNGLLSLAEYNFFEMRTSGE. 4 residues coordinate Ca(2+): aspartate 407, aspartate 409, asparagine 411, and glutamate 418.

It is found in the cell projection. It localises to the cilium membrane. Its function is as follows. Plays a role in the ciliary Hedgehog (Hh) signaling. The protein is EF-hand calcium-binding domain-containing protein 7 (efcab7) of Xenopus laevis (African clawed frog).